Reading from the N-terminus, the 309-residue chain is Protein FdhE (309 aa).

Belongs to the FdhE family.

It localises to the cytoplasm. Necessary for formate dehydrogenase activity. The protein is Protein FdhE of Escherichia coli O45:K1 (strain S88 / ExPEC).